Reading from the N-terminus, the 314-residue chain is Ribosomal protein uL3 glutamine methyltransferase (314 aa).

It belongs to the protein N5-glutamine methyltransferase family. PrmB subfamily.

The enzyme catalyses L-glutaminyl-[ribosomal protein uL3] + S-adenosyl-L-methionine = N(5)-methyl-L-glutaminyl-[ribosomal protein uL3] + S-adenosyl-L-homocysteine + H(+). In terms of biological role, methylates large ribosomal subunit protein uL3 on a specific glutamine residue. The polypeptide is Ribosomal protein uL3 glutamine methyltransferase (Haemophilus influenzae (strain ATCC 51907 / DSM 11121 / KW20 / Rd)).